We begin with the raw amino-acid sequence, 1904 residues long: Fatty acid synthase beta subunit hexB (1904 aa).

Residues 24-395 are acetyltransferase (AT) domain; it reads LSVAFGGQGP…TEGTGVRVIQ (372 aa). Residues 447-691 are enoyl reductase (ER) domain; the sequence is TQLLNAPPVM…LIVQTEGVGD (245 aa). Positions 1001 to 1491 are dehydratase (DH) domain; the sequence is GPAADCWTHH…RPNDRLKIQL (491 aa). The 114-residue stretch at 1399–1512 folds into the MaoC-like domain; it reads PGWNEGSTVL…MKVQAFNDET (114 aa). The tract at residues 1530–1893 is malonyl/palmitoyl transferase (MT/PT) domain; it reads YVFCGQGSQE…IEHVQSVTGS (364 aa).

Belongs to the fungal fatty acid synthetase subunit beta family. [Alpha(6)beta(6)] hexamers of two multifunctional subunits (alpha and beta).

The enzyme catalyses acetyl-CoA + n malonyl-CoA + 2n NADPH + 4n H(+) = a long-chain-acyl-CoA + n CoA + n CO2 + 2n NADP(+).. The catalysed reaction is holo-[ACP] + acetyl-CoA = acetyl-[ACP] + CoA. It carries out the reaction holo-[ACP] + malonyl-CoA = malonyl-[ACP] + CoA. It catalyses the reaction a (3R)-hydroxyacyl-[ACP] = a (2E)-enoyl-[ACP] + H2O. The enzyme catalyses a 2,3-saturated acyl-[ACP] + NAD(+) = a (2E)-enoyl-[ACP] + NADH + H(+). The catalysed reaction is (9Z)-octadecenoyl-[ACP] + H2O = (9Z)-octadecenoate + holo-[ACP] + H(+). It functions in the pathway mycotoxin biosynthesis. Its function is as follows. Fatty acid synthase beta subunit; part of the fragmented gene cluster that mediates the biosynthesis of dothistromin (DOTH), a polyketide toxin very similar in structure to the aflatoxin precursor, versicolorin B. The first step of the pathway is the conversion of acetate to norsolorinic acid (NOR) and requires the fatty acid synthase subunits hexA and hexB, as well as the polyketide synthase pksA. PksA combines a hexanoyl starter unit and 7 malonyl-CoA extender units to synthesize the precursor NOR. The hexanoyl starter unit is provided to the acyl-carrier protein (ACP) domain by the fungal fatty acid synthase hexA/hexB. The second step is the conversion of NOR to averantin (AVN) and requires the norsolorinic acid ketoreductase nor1, which catalyzes the dehydration of norsolorinic acid to form (1'S)-averantin. The cytochrome P450 monooxygenase avnA then catalyzes the hydroxylation of AVN to 5'hydroxyaverantin (HAVN). The next step is performed by adhA that transforms HAVN to averufin (AVF). Averufin might then be converted to hydroxyversicolorone by cypX and avfA. Hydroxyversicolorone is further converted versiconal hemiacetal acetate (VHA) by moxY. VHA is then the substrate for the versiconal hemiacetal acetate esterase est1 to yield versiconal (VAL). Versicolorin B synthase vbsA then converts VAL to versicolorin B (VERB) by closing the bisfuran ring. Then, the activity of the versicolorin B desaturase verB leads to versicolorin A (VERA). DotB, a predicted chloroperoxidase, may perform epoxidation of the A-ring of VERA. Alternatively, a cytochrome P450, such as cypX or avnA could catalyze this step. It is also possible that another, uncharacterized, cytochrome P450 enzyme is responsible for this step. Opening of the epoxide could potentially be achieved by the epoxide hydrolase epoA. However, epoA seems not to be required for DOTH biosynthesis, but other epoxide hydrolases may have the ability to complement this hydrolysis. Alternatively, opening of the epoxide ring could be achieved non-enzymatically. The next step is the deoxygenation of ring A to yield the 5,8-dihydroxyanthraquinone which is most likely catalyzed by the NADPH dehydrogenase encoded by ver1. The last stages of DOTH biosynthesis are proposed to involve hydroxylation of the bisfuran. OrdB and norB might have oxidative roles here. An alternative possibility is that cytochrome P450 monoogenases such as avnA and cypX might perform these steps in addition to previously proposed steps. In Dothistroma septosporum (strain NZE10 / CBS 128990) (Red band needle blight fungus), this protein is Fatty acid synthase beta subunit hexB.